Consider the following 220-residue polypeptide: Probable GTP-binding protein EngB (220 aa).

The 184-residue stretch at 24–207 (PQPEVAFAGR…HELIESWIAP (184 aa)) folds into the EngB-type G domain. GTP contacts are provided by residues 32 to 39 (GRSNAGKS), 59 to 63 (GRTQH), 81 to 84 (DLPG), 148 to 151 (TKCD), and 185 to 188 (LFSA). Residues S39 and T61 each coordinate Mg(2+).

It belongs to the TRAFAC class TrmE-Era-EngA-EngB-Septin-like GTPase superfamily. EngB GTPase family. Requires Mg(2+) as cofactor.

Necessary for normal cell division and for the maintenance of normal septation. This chain is Probable GTP-binding protein EngB, found in Paraburkholderia phymatum (strain DSM 17167 / CIP 108236 / LMG 21445 / STM815) (Burkholderia phymatum).